The primary structure comprises 266 residues: Killer cell lectin-like receptor 5 (266 aa).

Topologically, residues 1–44 are cytoplasmic; that stretch reads MSEPEVTYSTVRLHKSSGLQRLVSHEEIQGPGEAGYRKCSVPWQ. Residues 45 to 66 traverse the membrane as a helical; Signal-anchor for type II membrane protein segment; that stretch reads LTVRSLGIFCFLLLVTVAVLAV. Topologically, residues 67-266 are extracellular; it reads KIFQYSQHKQ…CGKKLDHFPG (200 aa). N-linked (GlcNAc...) asparagine glycans are attached at residues asparagine 87 and asparagine 104. Positions 143-261 constitute a C-type lectin domain; the sequence is GVKHWFCYGT…SYFCICGKKL (119 aa). 4 disulfide bridges follow: cysteine 149/cysteine 154, cysteine 167/cysteine 255, cysteine 171/cysteine 257, and cysteine 236/cysteine 249. Asparagine 250 is a glycosylation site (N-linked (GlcNAc...) asparagine).

In terms of assembly, homodimer; disulfide-linked. In terms of tissue distribution, mostly expressed in NK cells, but also observed on NK T and memory T-cells.

It is found in the membrane. In terms of biological role, receptor on natural killer (NK) cells for class I MHC. The chain is Killer cell lectin-like receptor 5 (Klra5) from Mus musculus (Mouse).